The following is a 278-amino-acid chain: MNDIDNLAEIKKKLWNGSINVKILLNIEDQIIEYLLTIPRNSYFPTVFPQLIRYFQNFITTIELSKVPIWLEFEEVPLKWNLPVGVLYDYLYLPALLNDHDLGCWTISMKYEPVYPIEYIIPFNEKLAGDGQIDYMKTMNRILMNQLKQSCFVLNGTAKPIMQLSEANTNQLWKSLISRNLGDFNVLNKKIIKTIDRIPVKIYIAGSPIVVQAPISKDQTLQEILSLHTPNLSSSSSSMSHPYIQGIDVTSLMNQSIREIWQLFKHLDNFLYITLIIL.

Residue lysine 148 forms a Glycyl lysine isopeptide (Lys-Gly) (interchain with G-Cter in ATG12) linkage.

This sequence belongs to the ATG5 family. In terms of assembly, conjugated with ATG12. Conjugated to ATG12; which is essential for autophagy.

The protein resides in the preautophagosomal structure membrane. Involved in cytoplasm to vacuole transport (Cvt) and autophagic vesicle formation. Autophagy is essential for maintenance of amino acid levels and protein synthesis under nitrogen starvation. Required for selective autophagic degradation of the nucleus (nucleophagy). Also required for mitophagy, which eliminates defective or superfluous mitochondria in order to fulfill cellular energy requirements and prevent excess ROS production. Conjugation with ATG12, through a ubiquitin-like conjugating system involving ATG7 as an E1-like activating enzyme and ATG10 as an E2-like conjugating enzyme, is essential for its function. The ATG12-ATG5 conjugate acts as an E3-like enzyme which is required for lipidation of ATG8 and ATG8 association to the vesicle membranes. This chain is Autophagy protein 5 (ATG5), found in Candida albicans (strain SC5314 / ATCC MYA-2876) (Yeast).